The primary structure comprises 304 residues: Acetylglutamate kinase (304 aa).

Substrate contacts are provided by residues 75 to 76, Arg-97, and Asn-196; that span reads GG.

Belongs to the acetylglutamate kinase family. ArgB subfamily.

The protein resides in the cytoplasm. It carries out the reaction N-acetyl-L-glutamate + ATP = N-acetyl-L-glutamyl 5-phosphate + ADP. The protein operates within amino-acid biosynthesis; L-arginine biosynthesis; N(2)-acetyl-L-ornithine from L-glutamate: step 2/4. Catalyzes the ATP-dependent phosphorylation of N-acetyl-L-glutamate. The protein is Acetylglutamate kinase of Corynebacterium urealyticum (strain ATCC 43042 / DSM 7109).